Here is a 422-residue protein sequence, read N- to C-terminus: UDP-N-acetylglucosamine 1-carboxyvinyltransferase (422 aa).

Phosphoenolpyruvate is bound at residue 22–23; that stretch reads KN. Residue arginine 95 coordinates UDP-N-acetyl-alpha-D-glucosamine. The active-site Proton donor is the cysteine 119. Cysteine 119 bears the 2-(S-cysteinyl)pyruvic acid O-phosphothioketal mark. UDP-N-acetyl-alpha-D-glucosamine contacts are provided by residues 124 to 128, aspartate 309, and valine 331; that span reads RPIDQ.

This sequence belongs to the EPSP synthase family. MurA subfamily.

The protein localises to the cytoplasm. The enzyme catalyses phosphoenolpyruvate + UDP-N-acetyl-alpha-D-glucosamine = UDP-N-acetyl-3-O-(1-carboxyvinyl)-alpha-D-glucosamine + phosphate. It participates in cell wall biogenesis; peptidoglycan biosynthesis. Cell wall formation. Adds enolpyruvyl to UDP-N-acetylglucosamine. This chain is UDP-N-acetylglucosamine 1-carboxyvinyltransferase, found in Anaeromyxobacter dehalogenans (strain 2CP-1 / ATCC BAA-258).